The following is a 182-amino-acid chain: CDP-diacylglycerol--glycerol-3-phosphate 3-phosphatidyltransferase (182 aa).

The Cytoplasmic portion of the chain corresponds to 2–12 (QFNIPTLLTLF). A helical membrane pass occupies residues 13 to 37 (RVALIPFFVLAFYLPFVWAPLLCAL). At 38–60 (IFVFAAVTDWFDGFLARRWKQTT) the chain is on the periplasmic side. The chain crosses the membrane as a helical span at residues 61-81 (RFGAFLDPVADKVMVAVALVL). At 82 to 86 (VAEYY) the chain is on the cytoplasmic side. Residues 87–107 (HSWWITLPAATMIAREIIISA) traverse the membrane as a helical segment. Over 108 to 145 (LREWMAEIGKRSSVAVSWIGKVKTTAQMMALFALLWRP) the chain is Periplasmic. The helical transmembrane segment at 146 to 168 (ERIVEGIGVAALYIAAVLTFWSM) threads the bilayer. Residues 169–181 (FQYLNAARHDLLE) lie on the Cytoplasmic side of the membrane.

The protein belongs to the CDP-alcohol phosphatidyltransferase class-I family.

Its subcellular location is the cell inner membrane. It catalyses the reaction a CDP-1,2-diacyl-sn-glycerol + sn-glycerol 3-phosphate = a 1,2-diacyl-sn-glycero-3-phospho-(1'-sn-glycero-3'-phosphate) + CMP + H(+). The protein operates within phospholipid metabolism; phosphatidylglycerol biosynthesis; phosphatidylglycerol from CDP-diacylglycerol: step 1/2. Its function is as follows. Catalyzes the conversion of cytidine diphosphate diacylglycerol (CDP-DG) and glycerol 3-phosphate into phosphatidylglycerol. Essential for the synthesis of anionic phospholipids, thereby playing a role in balancing the ratio of zwitterionic and anionic phospholipids, which is thought to be important for normal membrane function. This Pectobacterium atrosepticum (strain SCRI 1043 / ATCC BAA-672) (Erwinia carotovora subsp. atroseptica) protein is CDP-diacylglycerol--glycerol-3-phosphate 3-phosphatidyltransferase.